A 310-amino-acid polypeptide reads, in one-letter code: HPr kinase/phosphorylase (310 aa).

Catalysis depends on residues H138 and K159. G153–S160 serves as a coordination point for ATP. Position 160 (S160) interacts with Mg(2+). The active-site Proton acceptor; for phosphorylation activity. Proton donor; for dephosphorylation activity is D177. Residues L201–N210 are important for the catalytic mechanism of both phosphorylation and dephosphorylation. E202 lines the Mg(2+) pocket. R243 is an active-site residue. Positions P264–R269 are important for the catalytic mechanism of dephosphorylation.

This sequence belongs to the HPrK/P family. As to quaternary structure, homohexamer. It depends on Mg(2+) as a cofactor.

The catalysed reaction is [HPr protein]-L-serine + ATP = [HPr protein]-O-phospho-L-serine + ADP + H(+). It catalyses the reaction [HPr protein]-O-phospho-L-serine + phosphate + H(+) = [HPr protein]-L-serine + diphosphate. Its function is as follows. Catalyzes the ATP- as well as the pyrophosphate-dependent phosphorylation of a specific serine residue in HPr, a phosphocarrier protein of the phosphoenolpyruvate-dependent sugar phosphotransferase system (PTS). HprK/P also catalyzes the pyrophosphate-producing, inorganic phosphate-dependent dephosphorylation (phosphorolysis) of seryl-phosphorylated HPr (P-Ser-HPr). The two antagonistic activities of HprK/P are regulated by several intracellular metabolites, which change their concentration in response to the absence or presence of rapidly metabolisable carbon sources (glucose, fructose, etc.) in the growth medium. Also phosphorylates/dephosphorylates the HPr-like catabolite repression protein crh on a specific serine residue. Therefore, by controlling the phosphorylation state of HPr and crh, HPrK/P is a sensor enzyme that plays a major role in the regulation of carbon metabolism and sugar transport: it mediates carbon catabolite repression (CCR), and regulates PTS-catalyzed carbohydrate uptake and inducer exclusion. This Bacillus pumilus (strain SAFR-032) protein is HPr kinase/phosphorylase.